A 242-amino-acid chain; its full sequence is Terpene cyclase dpchB (242 aa).

7 helical membrane passes run 16 to 36 (VVWI…ANYV), 51 to 71 (ALLP…MYAF), 78 to 95 (YVHF…YTAV), 114 to 134 (LIFV…AKQV), 141 to 161 (AWSA…QLLC), 169 to 189 (SYFL…QDII), and 207 to 227 (IWFV…LWYV).

It belongs to the paxB family.

It is found in the membrane. The protein operates within secondary metabolite biosynthesis; terpenoid biosynthesis. Its function is as follows. Terpene cyclase; part of the gene cluster that mediates the biosynthesis of the diterpenoid pyrones higginsianins A and B. The first step of the pathway is the synthesis of the alpha-pyrone moiety by the polyketide synthase dpchA via condensation of one acetyl-CoA starter unit with 3 malonyl-CoA units and 2 methylations. The alpha-pyrone is then combined with geranylgeranyl pyrophosphate (GGPP) formed by the GGPP synthase dpchD through the action of the prenyltransferase dpchC to yield a linear alpha-pyrone diterpenoid. Subsequent steps in the diterpenoid pyrone biosynthetic pathway involve the decalin core formation, which is initiated by the epoxidation of the C10-C11 olefin by the FAD-dependent oxidoreductase dpchE, and is followed by a cyclization cascade catalyzed by the terpene cyclase dpchB. The short chain dehydrogenase/reductase dpchG then oxidizes the 8S hydroxy group to a ketone and the short chain dehydrogenase/reductase dpchH reduces the ketone to the 8R hydroxy group to yield higginsianin B. Finally, the FAD-dependent oxidoreductase dpchF converts higginsianin B into higginsianin A. The polypeptide is Terpene cyclase dpchB (Colletotrichum higginsianum (strain IMI 349063) (Crucifer anthracnose fungus)).